Here is a 343-residue protein sequence, read N- to C-terminus: CCN family member 3 (343 aa).

A signal peptide spans 1–18 (MTPHLALCFILLIQQVAS). The IGFBP N-terminal domain occupies 19-90 (QKCPSQCDQC…RMETGTCMAL (72 aa)). Cystine bridges form between Cys-21–Cys-46, Cys-25–Cys-48, Cys-28–Cys-49, Cys-35–Cys-52, Cys-60–Cys-74, and Cys-66–Cys-87. Residues 93-159 (NSCVFDGVVY…GECCEKWVCD (67 aa)) form the VWFC domain. Residues 190-235 (ACIAQTTEWSACSKTCGMGVSSRVTNRNARCEMQKQIRLCMVRSCE) enclose the TSP type-1 domain. 5 cysteine pairs are disulfide-bonded: Cys-249/Cys-286, Cys-266/Cys-300, Cys-277/Cys-316, Cys-280/Cys-318, and Cys-285/Cys-322. One can recognise a CTCK domain in the interval 249–323 (CVRVRKTTKP…STCVCHYNCP (75 aa)). The N-linked (GlcNAc...) asparagine glycan is linked to Asn-265.

This sequence belongs to the CCN family.

The protein resides in the secreted. The protein localises to the cytoplasm. It is found in the cell junction. It localises to the gap junction. Immediate-early protein playing a role in various cellular processes including proliferation, adhesion, migration, differentiation and survival. Acts by binding to integrins or membrane receptors such as NOTCH1. The chain is CCN family member 3 (ccn3) from Xenopus laevis (African clawed frog).